A 230-amino-acid polypeptide reads, in one-letter code: Agamous-like MADS-box protein AGL11 (230 aa).

The MADS-box domain maps to 3-57 (RGKIEIKRIENSTNRQVTFCKRRNGLLKKAYELSVLCDAEVALIVFSTRGRLYEY). A K-box domain is found at 87-177 (AAYYQQESAK…RTKVAEVERY (91 aa)). Positions 211 to 230 (SGSGNGGSYSDPDKKILHLG) are disordered. Residues 221-230 (DPDKKILHLG) are compositionally biased toward basic and acidic residues.

In terms of assembly, interacts with AGL15 and AGL16.

The protein localises to the nucleus. Functionally, probable transcription factor. Is required, together with TT16/AGL32 for the maternal control of endothelium formation, which is essential for female gametophyte development and fertilization, and seed formation. The sequence is that of Agamous-like MADS-box protein AGL11 (AGL11) from Arabidopsis thaliana (Mouse-ear cress).